A 143-amino-acid chain; its full sequence is Hemoglobin subunit alpha-2 (143 aa).

An N-acetylserine modification is found at serine 2. Positions 2-143 (SLSTKDKDTV…LARALSEKYR (142 aa)) constitute a Globin domain. The heme b site is built by histidine 60 and histidine 89.

The protein belongs to the globin family. Hb 2 is a heterotetramer of two alpha-2 and two beta chains. Red blood cells.

Involved in oxygen transport from gills to the various peripheral tissues. The sequence is that of Hemoglobin subunit alpha-2 from Cottoperca gobio (Frogmouth).